Consider the following 229-residue polypeptide: Large ribosomal subunit protein bL25 (229 aa).

Disordered regions lie at residues 1–21 (MSDA…GASR) and 187–229 (PSAL…KGDD). Over residues 196-207 (SEEEEDGEEVDA) the composition is skewed to acidic residues.

It belongs to the bacterial ribosomal protein bL25 family. CTC subfamily. As to quaternary structure, part of the 50S ribosomal subunit; part of the 5S rRNA/L5/L18/L25 subcomplex. Contacts the 5S rRNA. Binds to the 5S rRNA independently of L5 and L18.

In terms of biological role, this is one of the proteins that binds to the 5S RNA in the ribosome where it forms part of the central protuberance. The polypeptide is Large ribosomal subunit protein bL25 (Erythrobacter litoralis (strain HTCC2594)).